Reading from the N-terminus, the 489-residue chain is Cysteine--tRNA ligase (489 aa).

Cys-27 serves as a coordination point for Zn(2+). Positions 29-39 (VTVYDLCHLGH) match the 'HIGH' region motif. Zn(2+) is bound by residues Cys-211, His-236, and Glu-240. The short motif at 268–272 (KMSKS) is the 'KMSKS' region element. Lys-271 is a binding site for ATP.

This sequence belongs to the class-I aminoacyl-tRNA synthetase family. As to quaternary structure, monomer. It depends on Zn(2+) as a cofactor.

It localises to the cytoplasm. It catalyses the reaction tRNA(Cys) + L-cysteine + ATP = L-cysteinyl-tRNA(Cys) + AMP + diphosphate. This is Cysteine--tRNA ligase from Prochlorococcus marinus (strain MIT 9312).